A 602-amino-acid chain; its full sequence is Elongation factor 4 (602 aa).

One can recognise a tr-type G domain in the interval 7–189 (SQIRNFSIIA…AIVHRIPPPA (183 aa)). Residues 19–24 (DHGKST) and 136–139 (NKID) contribute to the GTP site.

Belongs to the TRAFAC class translation factor GTPase superfamily. Classic translation factor GTPase family. LepA subfamily.

Its subcellular location is the cell inner membrane. It carries out the reaction GTP + H2O = GDP + phosphate + H(+). Functionally, required for accurate and efficient protein synthesis under certain stress conditions. May act as a fidelity factor of the translation reaction, by catalyzing a one-codon backward translocation of tRNAs on improperly translocated ribosomes. Back-translocation proceeds from a post-translocation (POST) complex to a pre-translocation (PRE) complex, thus giving elongation factor G a second chance to translocate the tRNAs correctly. Binds to ribosomes in a GTP-dependent manner. The chain is Elongation factor 4 from Gloeobacter violaceus (strain ATCC 29082 / PCC 7421).